A 439-amino-acid chain; its full sequence is ATP-dependent RNA helicase RhlB (439 aa).

The short motif at 9-37 (QKFADLPLCDEVKQALNENGFEHCTPIQA) is the Q motif element. One can recognise a Helicase ATP-binding domain in the interval 40–219 (LPVLLEKKDI…YDHMNDPVKV (180 aa)). Residue 53 to 60 (AQTGTGKT) coordinates ATP. A DEAD box motif is present at residues 165–168 (DEAD). In terms of domain architecture, Helicase C-terminal spans 243 to 390 (KLKLLHSLIE…VTSYDRDALI (148 aa)). Residues 394-439 (PPVKIHRKPHAGGRNLRDRNGSPRPSGSHRSGSGRPPRHDRTRRHS) are disordered. Low complexity predominate over residues 415-428 (SPRPSGSHRSGSGR). The segment covering 429-439 (PPRHDRTRRHS) has biased composition (basic residues).

Belongs to the DEAD box helicase family. RhlB subfamily. As to quaternary structure, component of the RNA degradosome, which is a multiprotein complex involved in RNA processing and mRNA degradation.

It localises to the cytoplasm. The catalysed reaction is ATP + H2O = ADP + phosphate + H(+). Functionally, DEAD-box RNA helicase involved in RNA degradation. Has RNA-dependent ATPase activity and unwinds double-stranded RNA. In Shewanella amazonensis (strain ATCC BAA-1098 / SB2B), this protein is ATP-dependent RNA helicase RhlB.